A 469-amino-acid polypeptide reads, in one-letter code: Phosphoenolpyruvate carboxylase (469 aa).

This sequence belongs to the PEPCase type 2 family. In terms of assembly, homotetramer. Requires Mg(2+) as cofactor.

The enzyme catalyses oxaloacetate + phosphate = phosphoenolpyruvate + hydrogencarbonate. Catalyzes the irreversible beta-carboxylation of phosphoenolpyruvate (PEP) to form oxaloacetate (OAA), a four-carbon dicarboxylic acid source for the tricarboxylic acid cycle. The protein is Phosphoenolpyruvate carboxylase of Pyrococcus horikoshii (strain ATCC 700860 / DSM 12428 / JCM 9974 / NBRC 100139 / OT-3).